We begin with the raw amino-acid sequence, 1178 residues long: Double-stranded RNA-specific adenosine deaminase (1178 aa).

The interval 1-40 (MSQGFRGPTGVFPHQTQSYLDPSHEHSKWRYPQPQGPESY) is disordered. An asymmetric dimethylarginine mark is found at R30 and R42. The 67-residue stretch at 135–201 (LSISQSPEQK…GKPPLWSLVP (67 aa)) folds into the Z-binding 1 domain. The interval 135–204 (LSISQSPEQK…PLWSLVPLSQ (70 aa)) is interaction with Z-DNA. Residues 221-244 (EFPRGEPGLDSEDGDPASDLEGPS) are disordered. Positions 229 to 238 (LDSEDGDPAS) are enriched in acidic residues. 2 positions are modified to phosphoserine: S231 and S238. One can recognise a Z-binding 2 domain in the interval 246–310 (PLDMAEIKEK…ATPPIWYLTD (65 aa)). Residues 316–383 (LQMKRSTHSA…SRHEARPGPM (68 aa)) are disordered. The span at 323–337 (HSAPAPTPTAVPEAT) shows a compositional bias: low complexity. The segment covering 360–379 (KRVENGQEPAIKHESRHEAR) has biased composition (basic and acidic residues). K371 is covalently cross-linked (Glycyl lysine isopeptide (Lys-Gly) (interchain with G-Cter in SUMO); alternate). Residue K371 forms a Glycyl lysine isopeptide (Lys-Gly) (interchain with G-Cter in SUMO1); alternate linkage. Residue K371 forms a Glycyl lysine isopeptide (Lys-Gly) (interchain with G-Cter in SUMO2); alternate linkage. S434 is subject to Phosphoserine. In terms of domain architecture, DRBM 1 spans 456-524 (NPVSGLLEYA…AVKAMAILLR (69 aa)). Positions 527–550 (KAKDSGQPEDLSHCPMEEDSEKPA) are enriched in basic and acidic residues. The interval 527–564 (KAKDSGQPEDLSHCPMEEDSEKPAEAQAPSSSATSLFS) is disordered. Over residues 554–564 (APSSSATSLFS) the composition is skewed to polar residues. 3 positions are modified to phosphoserine: S567, S582, and S589. A DRBM 2 domain is found at 567–635 (SPVTTLLECM…AEEAMKALQE (69 aa)). The segment at 631–657 (KALQEEAASSADDQSGGANTDSLDESM) is disordered. Over residues 635–648 (EEAASSADDQSGGA) the composition is skewed to low complexity. The N-terminal extension of DRBM 3 and constituent of a bi-partite nuclear localization signal stretch occupies residues 665-674 (IGELVRYLNT). The 69-residue stretch at 675 to 743 (NPVGGLLEYA…ADAALRVLIG (69 aa)) folds into the DRBM 3 domain. The segment at 744 to 750 (ESEKAEQ) is C-terminal extension of DRBM 3 and constituent of a bi-partite nuclear localization signal. T757 bears the Phosphothreonine mark. S763, S772, and S774 each carry phosphoserine. A Glycyl lysine isopeptide (Lys-Gly) (interchain with G-Cter in SUMO2) cross-link involves residue K824. The region spanning 835–1170 (SLGTGNRCVK…ISKPQEEKNF (336 aa)) is the A to I editase domain. A Zn(2+)-binding site is contributed by H859. The Proton donor role is filled by E861. Residues C915 and C985 each coordinate Zn(2+).

In terms of assembly, homodimer. Homodimerization is essential for its catalytic activity. Isoform 5 can form heterodimers with ADARB1/ADAR2. Isoform 1 and isoform 5 (via DRBM 3 domain) interact with TNPO1. Isoform 5 (via DRBM domains) interacts with XPO5. Isoform 1 and isoform 5 can interact with UPF1. Isoform 1 interacts with ILF2/NF45 and ILF3/NF90. Binding to ILF3/NF90 up-regulates ILF3-mediated gene expression. Isoform 1 and isoform 5 interact with EIF2AK2/PKR. In terms of processing, sumoylation reduces RNA-editing activity. As to expression, highest levels in brain and spleen. Lowest levels in liver.

It localises to the cytoplasm. It is found in the nucleus. The protein resides in the nucleolus. It carries out the reaction adenosine in double-stranded RNA + H2O + H(+) = inosine in double-stranded RNA + NH4(+). In terms of biological role, catalyzes the hydrolytic deamination of adenosine to inosine in double-stranded RNA (dsRNA) referred to as A-to-I RNA editing. This may affect gene expression and function in a number of ways that include mRNA translation by changing codons and hence the amino acid sequence of proteins since the translational machinery read the inosine as a guanosine; pre-mRNA splicing by altering splice site recognition sequences; RNA stability by changing sequences involved in nuclease recognition; genetic stability in the case of RNA virus genomes by changing sequences during viral RNA replication; and RNA structure-dependent activities such as microRNA production or targeting or protein-RNA interactions. Can edit both viral and cellular RNAs and can edit RNAs at multiple sites (hyper-editing) or at specific sites (site-specific editing). Its cellular RNA substrates include: bladder cancer-associated protein (BLCAP), neurotransmitter receptors for glutamate (GRIA2) and serotonin (HTR2C) and GABA receptor (GABRA3). Site-specific RNA editing of transcripts encoding these proteins results in amino acid substitutions which consequently alters their functional activities. Exhibits low-level editing at the GRIA2 Q/R site, but edits efficiently at the R/G site and HOTSPOT1. Does not affect polyomavirus replication but provides protection against virus-induced cytopathic effects. Essential for embryonic development and cell survival and plays a critical role in the maintenance of hematopoietic stem cells. The chain is Double-stranded RNA-specific adenosine deaminase (Adar) from Mus musculus (Mouse).